A 52-amino-acid polypeptide reads, in one-letter code: ATP synthase protein 8 (52 aa).

A helical membrane pass occupies residues 6–26 (PINGFVILCSISLMLLTLLIN).

The protein belongs to the ATPase protein 8 family. In terms of assembly, F-type ATPases have 2 components, CF(1) - the catalytic core - and CF(0) - the membrane proton channel.

The protein resides in the mitochondrion membrane. Functionally, mitochondrial membrane ATP synthase (F(1)F(0) ATP synthase or Complex V) produces ATP from ADP in the presence of a proton gradient across the membrane which is generated by electron transport complexes of the respiratory chain. F-type ATPases consist of two structural domains, F(1) - containing the extramembraneous catalytic core and F(0) - containing the membrane proton channel, linked together by a central stalk and a peripheral stalk. During catalysis, ATP synthesis in the catalytic domain of F(1) is coupled via a rotary mechanism of the central stalk subunits to proton translocation. Part of the complex F(0) domain. Minor subunit located with subunit a in the membrane. The polypeptide is ATP synthase protein 8 (MT-ATP8) (Albinaria turrita (Door snail)).